We begin with the raw amino-acid sequence, 326 residues long: Olfactory receptor 10X1 (326 aa).

Residues 1 to 41 (MVLNVYCCFFQISDIQTMKINQTILKEFILVGFSVYPHVQT) are Extracellular-facing. A glycan (N-linked (GlcNAc...) asparagine) is linked at Asn21. A helical transmembrane segment spans residues 42–62 (FLFVVFFCLYLLTLAGNLIIM). Residues 63-70 (GLTWVDRS) are Cytoplasmic-facing. The helical transmembrane segment at 71–91 (LHTPMYLFLSALSFSETCYTL) threads the bilayer. Topologically, residues 92 to 115 (TIVPKMLEDLLAKDRSISVTGCSL) are extracellular. Cysteines 113 and 205 form a disulfide. A helical membrane pass occupies residues 116–136 (QMCFFLGLGGTNCIILTLMGY). Over 137–155 (DRFLAICNPLRYPLLMTNI) the chain is Cytoplasmic. A helical membrane pass occupies residues 156–176 (VCGQLVASACTAGFFISLTET). The Extracellular portion of the chain corresponds to 177-213 (ALIFRDSFCRPNLVKHFFCHMLAVIRLSCIDSNHTEF). The N-linked (GlcNAc...) asparagine glycan is linked to Asn209. Residues 214–233 (IITLISVSGLLGTLLLIILT) traverse the membrane as a helical segment. Residues 234 to 253 (DVFIISTVLRIPSAEGKQKA) lie on the Cytoplasmic side of the membrane. The helical transmembrane segment at 254-274 (FTTCASHLTVVIIHFGFASIV) threads the bilayer. Topologically, residues 275 to 284 (YLKPEASGDD) are extracellular. The chain crosses the membrane as a helical span at residues 285–305 (TLIAVPYTVITPFLSPIIFSL). The Cytoplasmic portion of the chain corresponds to 306 to 326 (RNKDMKNAFRRMMGNTVALKK).

It belongs to the G-protein coupled receptor 1 family.

The protein localises to the cell membrane. Its function is as follows. Odorant receptor. The sequence is that of Olfactory receptor 10X1 (OR10X1) from Homo sapiens (Human).